Here is a 140-residue protein sequence, read N- to C-terminus: NADH-quinone oxidoreductase subunit I (140 aa).

4Fe-4S ferredoxin-type domains are found at residues 42–71 and 81–110; these read GSFT…VGSI and ASYE…FNQE. Residues Cys-51, Cys-54, Cys-57, Cys-61, Cys-90, Cys-93, Cys-96, and Cys-100 each contribute to the [4Fe-4S] cluster site.

This sequence belongs to the complex I 23 kDa subunit family. As to quaternary structure, NDH-1 is composed of 14 different subunits. Subunits NuoA, H, J, K, L, M, N constitute the membrane sector of the complex. Requires [4Fe-4S] cluster as cofactor.

Its subcellular location is the cell membrane. It catalyses the reaction a quinone + NADH + 5 H(+)(in) = a quinol + NAD(+) + 4 H(+)(out). Functionally, NDH-1 shuttles electrons from NADH, via FMN and iron-sulfur (Fe-S) centers, to quinones in the respiratory chain. The immediate electron acceptor for the enzyme in this species is believed to be ubiquinone. Couples the redox reaction to proton translocation (for every two electrons transferred, four hydrogen ions are translocated across the cytoplasmic membrane), and thus conserves the redox energy in a proton gradient. The chain is NADH-quinone oxidoreductase subunit I from Carboxydothermus hydrogenoformans (strain ATCC BAA-161 / DSM 6008 / Z-2901).